The following is a 298-amino-acid chain: Apolipoprotein E (298 aa).

A signal peptide spans 1–18 (MKVLWAALVVTLLAGCQA). 6 consecutive repeat copies span residues 74–95 (LLME…QELA), 96–117 (PMAE…SRLR), 118–139 (ADME…TMMG), 140–161 (QSGE…KRLL), 162–183 (RDVE…EGAE), and 223–244 (GRLE…EQME). Residues 74-244 (LLMEDTMKEV…RLEEVREQME (171 aa)) are 8 X 22 AA approximate tandem repeats. A Methionine sulfoxide modification is found at methionine 137. Serine 141 carries the phosphoserine modification. Residues 152–162 (HLRKLRKRLLR) form an LDL and other lipoprotein receptors binding region. 156–159 (LRKR) is a binding site for heparin. The segment at 204-272 (SLPSQPLRER…SWFEPMMEDM (69 aa)) is lipid-binding and lipoprotein association. Position 218-225 (218-225 (GEQMRGRL)) interacts with heparin. The segment at 260-272 (RFKSWFEPMMEDM) is specificity for association with VLDL.

It belongs to the apolipoprotein A1/A4/E family. Homotetramer. May interact with ABCA1; functionally associated with ABCA1 in the biogenesis of HDLs. May interact with APP/A4 amyloid-beta peptide; the interaction is extremely stable in vitro but its physiological significance is unclear. May interact with MAPT. May interact with MAP2. In the cerebrospinal fluid, interacts with secreted SORL1. Interacts with PMEL; this allows the loading of PMEL luminal fragment on ILVs to induce fibril nucleation. APOE exists as multiple glycosylated and sialylated glycoforms within cells and in plasma. The extent of glycosylation and sialylation are tissue and context specific. In terms of processing, glycated in plasma VLDL. Post-translationally, phosphorylated by FAM20C in the extracellular medium.

The protein resides in the secreted. It is found in the extracellular space. The protein localises to the extracellular matrix. It localises to the extracellular vesicle. Its subcellular location is the endosome. The protein resides in the multivesicular body. Its function is as follows. APOE is an apolipoprotein, a protein associating with lipid particles, that mainly functions in lipoprotein-mediated lipid transport between organs via the plasma and interstitial fluids. APOE is a core component of plasma lipoproteins and is involved in their production, conversion and clearance. Apolipoproteins are amphipathic molecules that interact both with lipids of the lipoprotein particle core and the aqueous environment of the plasma. As such, APOE associates with chylomicrons, chylomicron remnants, very low density lipoproteins (VLDL) and intermediate density lipoproteins (IDL) but shows a preferential binding to high-density lipoproteins (HDL). It also binds a wide range of cellular receptors including the LDL receptor/LDLR, the LDL receptor-related proteins LRP1, LRP2 and LRP8 and the very low-density lipoprotein receptor/VLDLR that mediate the cellular uptake of the APOE-containing lipoprotein particles. Finally, APOE also has a heparin-binding activity and binds heparan-sulfate proteoglycans on the surface of cells, a property that supports the capture and the receptor-mediated uptake of APOE-containing lipoproteins by cells. A main function of APOE is to mediate lipoprotein clearance through the uptake of chylomicrons, VLDLs, and HDLs by hepatocytes. APOE is also involved in the biosynthesis by the liver of VLDLs as well as their uptake by peripheral tissues ensuring the delivery of triglycerides and energy storage in muscle, heart and adipose tissues. By participating in the lipoprotein-mediated distribution of lipids among tissues, APOE plays a critical role in plasma and tissues lipid homeostasis. APOE is also involved in two steps of reverse cholesterol transport, the HDLs-mediated transport of cholesterol from peripheral tissues to the liver, and thereby plays an important role in cholesterol homeostasis. First, it is functionally associated with ABCA1 in the biogenesis of HDLs in tissues. Second, it is enriched in circulating HDLs and mediates their uptake by hepatocytes. APOE also plays an important role in lipid transport in the central nervous system, regulating neuron survival and sprouting. In Dasyprocta punctata (Central American agouti), this protein is Apolipoprotein E (APOE).